The primary structure comprises 203 residues: Outer-membrane lipoprotein LolB (203 aa).

The N-terminal stretch at 1–20 (MNRSRRLALLCLGVPLLLQA) is a signal peptide. A lipid anchor (N-palmitoyl cysteine) is attached at cysteine 21. Cysteine 21 carries the S-diacylglycerol cysteine lipid modification.

Belongs to the LolB family. Monomer.

It is found in the cell outer membrane. Plays a critical role in the incorporation of lipoproteins in the outer membrane after they are released by the LolA protein. The chain is Outer-membrane lipoprotein LolB from Cupriavidus taiwanensis (strain DSM 17343 / BCRC 17206 / CCUG 44338 / CIP 107171 / LMG 19424 / R1) (Ralstonia taiwanensis (strain LMG 19424)).